Here is a 374-residue protein sequence, read N- to C-terminus: tRNA-specific 2-thiouridylase MnmA (374 aa).

ATP is bound by residues 8-15 (GLSGGVDS) and Met34. Positions 104-106 (NPD) are interaction with target base in tRNA. Cys109 acts as the Nucleophile in catalysis. Cys109 and Cys208 are oxidised to a cystine. Gly134 provides a ligand contact to ATP. Residues 158 to 160 (KDQ) form an interaction with tRNA region. Cys208 acts as the Cysteine persulfide intermediate in catalysis. The tract at residues 321–322 (RY) is interaction with tRNA.

This sequence belongs to the MnmA/TRMU family.

It localises to the cytoplasm. It catalyses the reaction S-sulfanyl-L-cysteinyl-[protein] + uridine(34) in tRNA + AH2 + ATP = 2-thiouridine(34) in tRNA + L-cysteinyl-[protein] + A + AMP + diphosphate + H(+). Its function is as follows. Catalyzes the 2-thiolation of uridine at the wobble position (U34) of tRNA, leading to the formation of s(2)U34. This is tRNA-specific 2-thiouridylase MnmA from Mesoplasma florum (strain ATCC 33453 / NBRC 100688 / NCTC 11704 / L1) (Acholeplasma florum).